Here is a 466-residue protein sequence, read N- to C-terminus: Arginine biosynthesis bifunctional protein ArgJ, mitochondrial (466 aa).

Residues 1–9 (MSSLVLKRF) constitute a mitochondrion transit peptide. Thr183, Lys209, Thr232, Glu320, Asn461, and Ser466 together coordinate substrate. The active-site Nucleophile is Thr232.

This sequence belongs to the ArgJ family. As to quaternary structure, heterodimer of an alpha and a beta chain. Post-translationally, the alpha and beta chains are autoproteolytically processed from a single precursor protein within the mitochondrion.

It localises to the mitochondrion matrix. The enzyme catalyses N(2)-acetyl-L-ornithine + L-glutamate = N-acetyl-L-glutamate + L-ornithine. It carries out the reaction L-glutamate + acetyl-CoA = N-acetyl-L-glutamate + CoA + H(+). The protein operates within amino-acid biosynthesis; L-arginine biosynthesis; L-ornithine and N-acetyl-L-glutamate from L-glutamate and N(2)-acetyl-L-ornithine (cyclic): step 1/1. It participates in amino-acid biosynthesis; L-arginine biosynthesis; N(2)-acetyl-L-ornithine from L-glutamate: step 1/4. Functionally, catalyzes two activities which are involved in the cyclic version of arginine biosynthesis: the synthesis of acetylglutamate from glutamate and acetyl-CoA, and of ornithine by transacetylation between acetylornithine and glutamate. The polypeptide is Arginine biosynthesis bifunctional protein ArgJ, mitochondrial (Laccaria bicolor (strain S238N-H82 / ATCC MYA-4686) (Bicoloured deceiver)).